An 85-amino-acid chain; its full sequence is MSSGGLLLLLGLLTLWAELTPVSSRKRHPDCDKPPDTRICQTVVRAFYYKPSEKRCVQFRYGGCKGNGNHFKSDHLCRCECLEYR.

A signal peptide spans 1-24; that stretch reads MSSGGLLLLLGLLTLWAELTPVSS. Residues 31-81 form the BPTI/Kunitz inhibitor domain; it reads CDKPPDTRICQTVVRAFYYKPSEKRCVQFRYGGCKGNGNHFKSDHLCRCEC. 3 cysteine pairs are disulfide-bonded: Cys31–Cys81, Cys40–Cys64, and Cys56–Cys77.

The protein belongs to the venom Kunitz-type family. As to quaternary structure, heterodimer; disulfide-linked. The A chain has phospholipase A2 activity and the B chain shows homology with the basic protease inhibitors. As to expression, expressed by the venom gland.

The protein localises to the secreted. Beta-bungarotoxin is a presynaptic neurotoxin of the venom. The B chain is homologous to venom basic protease inhibitors but has no protease inhibitor activity and is non-toxic. This is Kunitz-type serine protease inhibitor homolog beta-bungarotoxin B3 chain from Bungarus candidus (Malayan krait).